Reading from the N-terminus, the 289-residue chain is Ribosomal RNA small subunit methyltransferase A (289 aa).

The S-adenosyl-L-methionine site is built by N21, L23, G48, E69, D94, and N120.

This sequence belongs to the class I-like SAM-binding methyltransferase superfamily. rRNA adenine N(6)-methyltransferase family. RsmA subfamily.

Its subcellular location is the cytoplasm. The enzyme catalyses adenosine(1518)/adenosine(1519) in 16S rRNA + 4 S-adenosyl-L-methionine = N(6)-dimethyladenosine(1518)/N(6)-dimethyladenosine(1519) in 16S rRNA + 4 S-adenosyl-L-homocysteine + 4 H(+). Its function is as follows. Specifically dimethylates two adjacent adenosines (A1518 and A1519) in the loop of a conserved hairpin near the 3'-end of 16S rRNA in the 30S particle. May play a critical role in biogenesis of 30S subunits. This Actinobacillus pleuropneumoniae serotype 7 (strain AP76) protein is Ribosomal RNA small subunit methyltransferase A.